We begin with the raw amino-acid sequence, 156 residues long: Snaclec alboaggregin-B subunit alpha (156 aa).

The N-terminal stretch at 1–23 (MGRFIFVSFGLLVVFLSLSGTGA) is a signal peptide. Residues 24 to 151 (DCPSDWSSFK…CEQKHIFMCK (128 aa)) form the C-type lectin domain. 3 disulfide bridges follow: C25–C36, C53–C150, and C125–C142.

Belongs to the snaclec family. As to quaternary structure, heterodimer of subunits alpha and beta; disulfide-linked. As to expression, expressed by the venom gland.

The protein localises to the secreted. In terms of biological role, weakly agglutinates platelets at high doses by binding to GPIbalpha (GP1BA). The protein is Snaclec alboaggregin-B subunit alpha of Trimeresurus albolabris (White-lipped pit viper).